Reading from the N-terminus, the 133-residue chain is Nickel-responsive regulator (133 aa).

The Ni(2+) site is built by His76, His87, His89, and Cys95.

It belongs to the transcriptional regulatory CopG/NikR family. Homotetramer. Ni(2+) is required as a cofactor.

Transcriptional repressor of the nikABCDE operon. Is active in the presence of excessive concentrations of intracellular nickel. This Escherichia coli O6:K15:H31 (strain 536 / UPEC) protein is Nickel-responsive regulator.